The chain runs to 466 residues: Histidine--tRNA ligase (466 aa).

The protein belongs to the class-II aminoacyl-tRNA synthetase family. In terms of assembly, homodimer.

It localises to the cytoplasm. The catalysed reaction is tRNA(His) + L-histidine + ATP = L-histidyl-tRNA(His) + AMP + diphosphate + H(+). The chain is Histidine--tRNA ligase from Bifidobacterium animalis subsp. lactis (strain AD011).